Consider the following 415-residue polypeptide: MERSAVASGFHRNYILCASRAATSTTRLHSLSSLRNFPSSSLRIRHCPSPISSNFIVSEVSRNRRCDAVSSSTTDVTELAEIDWDKIDFGLKPTDYMYAMKCSRDGEFSQGQLQPFGNIDINPAAGVLNYGQGLFEGLKAYRKQDGNILLFRPEENAIRMRNGAERMCMPSPTVEQFVEAVKTTVLANKRWIPPPGKGSLYIRPLLMGTGAVLGLAPAPEYTFLIFVSPVGNYFKEGVAPINLIVETEFHRATPGGTGGVKTIGNYAAVLKAQSIAKAKGYSDVLYLDCLHKRYLEEVSSCNIFIVKDNVISTPEIKGTILPGITRKSIIEVARSQGFKVEERNVTVDELVEADEVFCTGTAVVLSPVGSITYKSQRFSYGEDGFGTVSKQLYTSLTSLQMGLSEDNMNWTVQLS.

The N-terminal 65 residues, 1-65 (MERSAVASGF…IVSEVSRNRR (65 aa)), are a transit peptide targeting the chloroplast. The residue at position 261 (Lys-261) is an N6-(pyridoxal phosphate)lysine.

The protein belongs to the class-IV pyridoxal-phosphate-dependent aminotransferase family. The cofactor is pyridoxal 5'-phosphate.

It is found in the plastid. The protein localises to the chloroplast. The catalysed reaction is L-leucine + 2-oxoglutarate = 4-methyl-2-oxopentanoate + L-glutamate. The enzyme catalyses L-isoleucine + 2-oxoglutarate = (S)-3-methyl-2-oxopentanoate + L-glutamate. It carries out the reaction L-valine + 2-oxoglutarate = 3-methyl-2-oxobutanoate + L-glutamate. It participates in amino-acid biosynthesis; L-isoleucine biosynthesis; L-isoleucine from 2-oxobutanoate: step 4/4. The protein operates within amino-acid biosynthesis; L-leucine biosynthesis; L-leucine from 3-methyl-2-oxobutanoate: step 4/4. Its pathway is amino-acid biosynthesis; L-valine biosynthesis; L-valine from pyruvate: step 4/4. Its function is as follows. Converts 2-oxo acids to branched-chain amino acids. Acts on leucine, isoleucine and valine. The polypeptide is Branched-chain-amino-acid aminotransferase 5, chloroplastic (BCAT5) (Arabidopsis thaliana (Mouse-ear cress)).